The primary structure comprises 428 residues: Glutamate-1-semialdehyde 2,1-aminomutase (428 aa).

N6-(pyridoxal phosphate)lysine is present on Lys267.

Belongs to the class-III pyridoxal-phosphate-dependent aminotransferase family. HemL subfamily. As to quaternary structure, homodimer. Pyridoxal 5'-phosphate is required as a cofactor.

The protein resides in the cytoplasm. The catalysed reaction is (S)-4-amino-5-oxopentanoate = 5-aminolevulinate. Its pathway is porphyrin-containing compound metabolism; protoporphyrin-IX biosynthesis; 5-aminolevulinate from L-glutamyl-tRNA(Glu): step 2/2. In Pelobacter propionicus (strain DSM 2379 / NBRC 103807 / OttBd1), this protein is Glutamate-1-semialdehyde 2,1-aminomutase.